Consider the following 249-residue polypeptide: Cell division protein DivIB (249 aa).

Residues methionine 1–arginine 19 lie on the Cytoplasmic side of the membrane. The helical transmembrane segment at isoleucine 20–tyrosine 40 threads the bilayer. In terms of domain architecture, POTRA spans phenylalanine 41–arginine 109. The Extracellular portion of the chain corresponds to phenylalanine 41–glutamine 249.

The protein belongs to the FtsQ/DivIB family. DivIB subfamily.

The protein resides in the cell membrane. Cell division protein that may be involved in stabilizing or promoting the assembly of the division complex. This chain is Cell division protein DivIB, found in Clostridium acetobutylicum (strain ATCC 824 / DSM 792 / JCM 1419 / IAM 19013 / LMG 5710 / NBRC 13948 / NRRL B-527 / VKM B-1787 / 2291 / W).